The primary structure comprises 150 residues: Transcriptional repressor NrdR (150 aa).

A zinc finger lies at 3 to 34 (CPFCAHPDSKVVDSRPDKGGAAIRRRRECESC). The 91-residue stretch at 49-139 (PLVLKKDGRR…VYRSFKDVNE (91 aa)) folds into the ATP-cone domain.

This sequence belongs to the NrdR family. The cofactor is Zn(2+).

Its function is as follows. Negatively regulates transcription of bacterial ribonucleotide reductase nrd genes and operons by binding to NrdR-boxes. The chain is Transcriptional repressor NrdR from Geobacter metallireducens (strain ATCC 53774 / DSM 7210 / GS-15).